The following is a 495-amino-acid chain: MSPKMVAPPTNLHFVLFPLMAQGHLVPMVDIARILAQRGATVTIITTPYHANRVRPVISRAIATNLKIQLLELQLRSTEAGLPEGCESFDQLPSFEYWKNISTAIDLLQQPAEDLLRELSPPPDCIISDFLFPWTTDVARRLNIPRLVFNGPGCFYLLCIHVAITSNILGENEPVSSNTERVVLPGLPDRIEVTKLQIVGSSRPANVDEMGSWLRAVEAEKASFGIVVNTFEELEPEYVEEYKTVKDKKMWCIGPVSLCNKTGPDLAERGNKAAITEHNCLKWLDERKLGSVLYVCLGSLARISAAQAIELGLGLESINRPFIWCVRNETDELKTWFLDGFEERVRDRGLIVHGWAPQVLILSHPTIGGFLTHCGWNSTIESITAGVPMITWPFFADQFLNEAFIVEVLKIGVRIGVERACLFGEEDKVGVLVKKEDVKKAVECLMDEDEDGDQRRKRVIELAKMAKIAMAEGGSSYENVSSLIRDVTETVRAPH.

UDP-alpha-D-glucose is bound by residues serine 299, 355 to 356 (WA), 373 to 381 (HCGWNSTIE), and 395 to 398 (FADQ).

It belongs to the UDP-glycosyltransferase family.

Functionally, may glycosylate diterpenes or flavonols in leaves. The sequence is that of UDP-glycosyltransferase 73E1 from Stevia rebaudiana (Stevia).